Reading from the N-terminus, the 234-residue chain is Sugar fermentation stimulation protein homolog (234 aa).

Belongs to the SfsA family.

This Shewanella sp. (strain ANA-3) protein is Sugar fermentation stimulation protein homolog.